The primary structure comprises 577 residues: Protein O-linked-mannose beta-1,4-N-acetylglucosaminyltransferase 2 (577 aa).

At 1 to 4 the chain is on the cytoplasmic side; the sequence is MNIA. A helical; Signal-anchor for type II membrane protein membrane pass occupies residues 5–25; that stretch reads AVFNALLVSVLATVLWKYIKL. Over 26–577 the chain is Lumenal; the sequence is REHAFMVEEE…PFADVLLCST (552 aa). N-linked (GlcNAc...) asparagine glycans are attached at residues asparagine 98, asparagine 275, asparagine 335, and asparagine 540. The region spanning 481-577 is the Fibronectin type-III domain; it reads KVRDARCQAS…PFADVLLCST (97 aa).

The protein belongs to the glycosyltransferase 61 family.

It is found in the endoplasmic reticulum membrane. The catalysed reaction is 3-O-(alpha-D-mannosyl)-L-threonyl-[protein] + UDP-N-acetyl-alpha-D-glucosamine = 3-O-(N-acetyl-beta-D-glucosaminyl-(1-&gt;4)-alpha-D-mannosyl)-L-threonyl-[protein] + UDP + H(+). Its pathway is protein modification; protein glycosylation. O-linked mannose beta-1,4-N-acetylglucosaminyltransferase that transfers UDP-N-acetyl-D-glucosamine to the 4-position of the mannose to generate N-acetyl-D-glucosamine-beta-1,4-O-D-mannosylprotein. Involved in the biosynthesis of the phosphorylated O-mannosyl trisaccharide (N-acetylgalactosamine-beta-3-N-acetylglucosamine-beta-4-(phosphate-6-)mannose), a carbohydrate structure present in alpha-dystroglycan (DAG1), which is required for binding laminin G-like domain-containing extracellular proteins with high affinity. The chain is Protein O-linked-mannose beta-1,4-N-acetylglucosaminyltransferase 2 (POMGNT2) from Gallus gallus (Chicken).